Reading from the N-terminus, the 313-residue chain is MIDRFGRSIEDLRVTLTHVCNFSCFFCHMEGEDNSQSLLSPEEISLVAKVGIEYGIRSVKLTGGEPTLRRDLLQIIRELKDVGIKEVSMTTNGVLLSTLAWKLKEVGLDRVNVSLHSLDKQLFKEITGVDALDKVIEGIKEAIKAGLRPLKLNFVLTKKNISQLDNIINFAIETGVDELHLIELHPVGLGKNTFEYHEKLESIEKILKERADKIEIRSKHYRPRYYLNNLVIEVVKPYANPIFCAGCNRIRLTADGKLKTCLYRQDKEIDIMDILRGDFSLEEKIELIREAYEIAIAIREPNFKYKVESYAPS.

Positions 4–224 constitute a Radical SAM core domain; sequence RFGRSIEDLR…EIRSKHYRPR (221 aa). Residue Arg-13 coordinates GTP. The [4Fe-4S] cluster site is built by Cys-20, Cys-24, and Cys-27. Lys-60 contacts GTP. An S-adenosyl-L-methionine-binding site is contributed by Gly-64. Residue Thr-90 coordinates GTP. Ser-114 is a binding site for S-adenosyl-L-methionine. GTP is bound at residue Lys-151. The [4Fe-4S] cluster site is built by Cys-244 and Cys-247. GTP is bound at residue 249–251; it reads RIR. Cys-261 contributes to the [4Fe-4S] cluster binding site.

Belongs to the radical SAM superfamily. MoaA family. The cofactor is [4Fe-4S] cluster.

The enzyme catalyses GTP + AH2 + S-adenosyl-L-methionine = (8S)-3',8-cyclo-7,8-dihydroguanosine 5'-triphosphate + 5'-deoxyadenosine + L-methionine + A + H(+). The protein operates within cofactor biosynthesis; molybdopterin biosynthesis. Functionally, catalyzes the cyclization of GTP to (8S)-3',8-cyclo-7,8-dihydroguanosine 5'-triphosphate. The protein is Probable GTP 3',8-cyclase of Sulfurisphaera tokodaii (strain DSM 16993 / JCM 10545 / NBRC 100140 / 7) (Sulfolobus tokodaii).